Consider the following 275-residue polypeptide: Diaminopimelate epimerase (275 aa).

The substrate site is built by N13, Q46, and N66. C75 functions as the Proton donor in the catalytic mechanism. Substrate contacts are provided by residues 76 to 77 (GN), N159, N192, and 210 to 211 (ER). C219 (proton acceptor) is an active-site residue. 220–221 (GS) contacts substrate.

It belongs to the diaminopimelate epimerase family. Homodimer.

The protein resides in the cytoplasm. It carries out the reaction (2S,6S)-2,6-diaminopimelate = meso-2,6-diaminopimelate. The protein operates within amino-acid biosynthesis; L-lysine biosynthesis via DAP pathway; DL-2,6-diaminopimelate from LL-2,6-diaminopimelate: step 1/1. Catalyzes the stereoinversion of LL-2,6-diaminopimelate (L,L-DAP) to meso-diaminopimelate (meso-DAP), a precursor of L-lysine and an essential component of the bacterial peptidoglycan. This is Diaminopimelate epimerase from Idiomarina loihiensis (strain ATCC BAA-735 / DSM 15497 / L2-TR).